The sequence spans 160 residues: Major strawberry allergen Fra a 1.08 (160 aa).

This sequence belongs to the BetVI family. In terms of processing, phosphorylated in vivo. Phosphorylation prevents its activity as ribonuclease. Highly expressed in roots. Expressed a low levels in ripe red fruits.

In terms of biological role, possesses ribonuclease activity in vitro. This is Major strawberry allergen Fra a 1.08 from Fragaria ananassa (Strawberry).